The sequence spans 234 residues: Transcriptional activator protein TraR (234 aa).

The 66-residue stretch at 167-232 (TAEDAAWLDP…HLTALAIKRK (66 aa)) folds into the HTH luxR-type domain. Residues 191 to 210 (MEEIADVEEVKYNSVRVKLR) constitute a DNA-binding region (H-T-H motif).

The protein belongs to the autoinducer-regulated transcriptional regulatory protein family.

Its function is as follows. Positive regulation of conjugal transfer of Ti plasmids. The chain is Transcriptional activator protein TraR (traR) from Agrobacterium vitis (Rhizobium vitis).